A 415-amino-acid chain; its full sequence is Serine hydroxymethyltransferase (415 aa).

(6S)-5,6,7,8-tetrahydrofolate-binding positions include L122 and 126 to 128 (GHL). K230 is modified (N6-(pyridoxal phosphate)lysine).

The protein belongs to the SHMT family. In terms of assembly, homodimer. The cofactor is pyridoxal 5'-phosphate.

The protein localises to the cytoplasm. The catalysed reaction is (6R)-5,10-methylene-5,6,7,8-tetrahydrofolate + glycine + H2O = (6S)-5,6,7,8-tetrahydrofolate + L-serine. It participates in one-carbon metabolism; tetrahydrofolate interconversion. The protein operates within amino-acid biosynthesis; glycine biosynthesis; glycine from L-serine: step 1/1. In terms of biological role, catalyzes the reversible interconversion of serine and glycine with tetrahydrofolate (THF) serving as the one-carbon carrier. This reaction serves as the major source of one-carbon groups required for the biosynthesis of purines, thymidylate, methionine, and other important biomolecules. Also exhibits THF-independent aldolase activity toward beta-hydroxyamino acids, producing glycine and aldehydes, via a retro-aldol mechanism. The chain is Serine hydroxymethyltransferase from Leptothrix cholodnii (strain ATCC 51168 / LMG 8142 / SP-6) (Leptothrix discophora (strain SP-6)).